The following is a 72-amino-acid chain: Small ribosomal subunit protein bS18c (72 aa).

It belongs to the bacterial ribosomal protein bS18 family. Part of the 30S ribosomal subunit.

The protein resides in the plastid. Its subcellular location is the chloroplast. The protein is Small ribosomal subunit protein bS18c of Emiliania huxleyi (Coccolithophore).